The following is a 186-amino-acid chain: Cell division protein SepF (186 aa).

Residues 24–91 (EDEEEEERYA…HNPPHLRAVP (68 aa)) are disordered.

Belongs to the SepF family. In terms of assembly, homodimer. Interacts with FtsZ.

The protein resides in the cytoplasm. In terms of biological role, cell division protein that is part of the divisome complex and is recruited early to the Z-ring. Probably stimulates Z-ring formation, perhaps through the cross-linking of FtsZ protofilaments. Its function overlaps with FtsA. This chain is Cell division protein SepF, found in Rubrobacter xylanophilus (strain DSM 9941 / JCM 11954 / NBRC 16129 / PRD-1).